Here is a 394-residue protein sequence, read N- to C-terminus: Probable acetyl-CoA acyltransferase (394 aa).

The active-site Acyl-thioester intermediate is Cys88. Active-site proton acceptor residues include His349 and Cys378.

Belongs to the thiolase-like superfamily. Thiolase family.

It localises to the cytoplasm. It carries out the reaction 2 acetyl-CoA = acetoacetyl-CoA + CoA. This Staphylococcus epidermidis (strain ATCC 35984 / DSM 28319 / BCRC 17069 / CCUG 31568 / BM 3577 / RP62A) protein is Probable acetyl-CoA acyltransferase.